The following is a 1473-amino-acid chain: Sulfite reductase [NADPH] subunit beta (1473 aa).

Positions L728–W876 constitute a Flavodoxin-like domain. [4Fe-4S] cluster is bound by residues C1328, C1334, C1373, and C1377. Residue C1377 participates in siroheme binding.

The protein belongs to the nitrite and sulfite reductase 4Fe-4S domain family. In terms of assembly, alpha(2)-beta(2). The alpha component is a flavoprotein, the beta component is a hemoprotein. Siroheme is required as a cofactor. The cofactor is [4Fe-4S] cluster.

It is found in the cytoplasm. The catalysed reaction is hydrogen sulfide + 3 NADP(+) + 3 H2O = sulfite + 3 NADPH + 4 H(+). The protein operates within sulfur metabolism; hydrogen sulfide biosynthesis; hydrogen sulfide from sulfite (NADPH route): step 1/1. Its function is as follows. Catalyzes the reduction of sulfite to sulfide, one of several activities required for the biosynthesis of L-cysteine from sulfate. This chain is Sulfite reductase [NADPH] subunit beta (sir1), found in Schizosaccharomyces pombe (strain 972 / ATCC 24843) (Fission yeast).